We begin with the raw amino-acid sequence, 1452 residues long: MIVLVTCLLLLCSYHTVLSTTNNECIQVNVTQLAGNENLIRDFLFSNFKEEGSVVVGGYYPTEVWYNCSRTARTTAFQYFNNIHAFYFVMEAMENSTGNARGKPLLFHVHGEPVSVIISAYRDDVQQRPLLKHGLVCITKNRHINYEQFTSNQWNSTCTGADRKIPFSVIPTDNGTKIYGLEWNDDFVTAYISGRSYHLNINTNWFNNVTLLYSRSSTATWEYSAAYAYQGVSNFTYYKLNNTNGLKTYELCEDYEHCTGYATNVFAPTSGGYIPDGFSFNNWFLLTNSSTFVSGRFVTNQPLLINCLWPVPSFGVAAQEFCFEGAQFSQCNGVSLNNTVDVIRFNLNFTADVQSGMGATVFSLNTTGGVILEISCYSDTVSESSSYSYGEIPFGITDGPRYCYVLYNGTALKYLGTLPPSVKEIAISKWGHFYINGYNFFSTFPIGCISFNLTTGVSGAFWTIAYTSYTEALVQVENTAIKNVTYCNSHINNIKCSQLTANLNNGFYPVASSEVGFVNKSVVLLPSFFTYTAVNITIDLGMKLSGYGQPIASTLSNITLPMQDNNTDVYCIRSNQFSVYVHSTCKSSLWDNIFNQDCTDVLEATAVIKTGTCPFSFDKLNNYLTFNKFCLSLSPVGANCKFDVAARTRTNEQVVRSLYVIYEEGDNIVGVPSDNSGLHDLSVLHLDSCTDYNIYGRTGVGIIRRTNSTLLSGLYYTSLSGDLLGFKNVSDGVIYSVTPCDVSAQAAVIDGAIVGAMTSINSELLGLTHWTTTPNFYYYSIYNYTSERTRGTAIDSNDVDCEPVITYSNIGVCKNGALVFINVTHSDGDVQPISTGNVTIPTNFTISVQVEYMQVYTTPVSIDCARYVCNGNPRCNKLLTQYVSACQTIEQALAMGARLENMEVDSMLFVSENALKLASVEAFNSTENLDPIYKEWPSIGGSWLGGLKDILPSHNSKRKYGSAIEDLLFDKVVTSGLGTVDEDYKRCTGGYDIADLVCAQYYNGIMVLPGVANADKMTMYTASLAGGITLGALGGGAVAIPFAVAVQARLNYVALQTDVLNKNQQILANAFNQAIGNITQAFGKVNDAIHQTSQGLATVAKALAKVQDVVNTQGQALSHLTVQLQNNFQAISSSISDIYNRLDELSADAQVDRLITGRLTALNAFVSQTLTRQAEVRASRQLAKDKVNECVRSQSQRFGFCGNGTHLFSLANAAPNGMIFFHTVLLPTAYETVTAWSGICASDGDRTFGLVVKDVQLTLFRNLDDKFYLTPRTMYQPRVATSSDFVQIEGCDVLFVNATVIDLPSIIPDYIDINQTVQDILENYRPNWTVPEFTLDIFNATYLNLTGEIDDLEFRSEKLHNTTVELAILIDNINNTLVNLEWLNRIETYVKWPWYVWLLIGLVVVFCIPLLLFCCFSTGCCGCIGCLGSCCHSICSRRQFENYEPIEKVHVH.

The N-terminal stretch at M1–Q32 is a signal peptide. Residues L33–Y779 form an S1 region. Residues L33 to P1393 lie on the Virion surface side of the membrane. The tract at residues V660–V804 is interaction with host ANPEP. Positions S780–H1452 are S2. The fusion peptide stretch occupies residues A1025–V1046. Residues I1040 to L1159 form a heptad repeat 1 (HR1) region. Coiled-coil stretches lie at residues Q1107–V1151 and T1341–L1383. Residues P1308–V1405 are heptad repeat 2 (HR2). A helical membrane pass occupies residues W1394 to F1413. Over C1414–H1452 the chain is Intravirion. The KxHxx motif lies at K1448 to H1452.

The protein belongs to the alphacoronaviruses spike protein family. Homotrimer. During virus morphogenesis, found in a complex with M and HE proteins. Interacts with host ANPEP.

It localises to the virion membrane. The protein localises to the host endoplasmic reticulum-Golgi intermediate compartment membrane. Functionally, S1 region attaches the virion to the cell membrane by interacting with host ANPEP/aminopeptidase N, initiating the infection. Binding to the receptor probably induces conformational changes in the S glycoprotein unmasking the fusion peptide of S2 region and activating membranes fusion. S2 region belongs to the class I viral fusion protein. Under the current model, the protein has at least 3 conformational states: pre-fusion native state, pre-hairpin intermediate state, and post-fusion hairpin state. During viral and target cell membrane fusion, the coiled coil regions (heptad repeats) regions assume a trimer-of-hairpins structure, positioning the fusion peptide in close proximity to the C-terminal region of the ectodomain. The formation of this structure appears to drive apposition and subsequent fusion of viral and target cell membranes. The polypeptide is Spike glycoprotein (Felidae (cat family)).